The chain runs to 70 residues: Protein SlyX homolog (70 aa).

This sequence belongs to the SlyX family.

This Shewanella putrefaciens (strain CN-32 / ATCC BAA-453) protein is Protein SlyX homolog.